The primary structure comprises 1137 residues: Nonsense-mediated mRNA decay factor SMG7 (1137 aa).

Serine 2 carries the N-acetylserine modification. TPR repeat units follow at residues 152-185 (QHCLVHLGDIARYRNQTSQAESYYRHAAQLVPSN) and 187-219 (QPYNQLAILASSKGDHLTTIFYYCRSIAVKFPF). Phosphoserine is present on serine 520. Basic and acidic residues predominate over residues 620–631 (ELRKTPVSEARK). Disordered stretches follow at residues 620 to 646 (ELRKTPVSEARKTPVTQTPTQASNSQF), 696 to 794 (LQPT…YQQA), 890 to 911 (IDRRGKRSPGVFRPEQDPVPRM), 988 to 1055 (PSLP…AMGG), 1069 to 1089 (SSWHQASTPSGTWTGHGPSME), and 1104 to 1137 (SSSMMHPGPSALEQLLMQQKQKQQRGQGTMNPPH). Residue threonine 624 is modified to Phosphothreonine. Composition is skewed to polar residues over residues 633–646 (PVTQTPTQASNSQF) and 696–722 (LQPTAHSPAGNQVQAGKQSHIPYSQQR). A compositionally biased stretch (low complexity) spans 723-770 (PSGPGPMNQGPQQSQPPSQQPLTSLPAQPTAQSTSQLQVQALTQQQQS). Phosphoserine occurs at positions 781 and 897. Residues 988-998 (PSLPASSDHST) are compositionally biased toward polar residues. Over residues 999-1025 (PASQSPHSSNPSSLPSSPPTHNHNSVP) the composition is skewed to low complexity. Basic and acidic residues predominate over residues 1036-1050 (DNRDRRTADRWKTDK). Residues 1069–1081 (SSWHQASTPSGTW) show a composition bias toward polar residues. Low complexity predominate over residues 1117–1131 (QLLMQQKQKQQRGQG).

As to quaternary structure, part of a complex that contains SMG5, SMG7, PPP2CA, a short isoform of UPF3A (isoform UPF3AS, but not isoform UPF3AL) and phosphorylated UPF1. Interacts with DHX34; the interaction is RNA-independent.

It localises to the cytoplasm. It is found in the nucleus. Functionally, plays a role in nonsense-mediated mRNA decay. Recruits UPF1 to cytoplasmic mRNA decay bodies. Together with SMG5 is thought to provide a link to the mRNA degradation machinery involving exonucleolytic pathways, and to serve as an adapter for UPF1 to protein phosphatase 2A (PP2A), thereby triggering UPF1 dephosphorylation. The polypeptide is Nonsense-mediated mRNA decay factor SMG7 (Homo sapiens (Human)).